The sequence spans 637 residues: Glutamate--cysteine ligase catalytic subunit (637 aa).

Methionine 1 bears the N-acetylmethionine mark. Phosphoserine is present on residues serine 5 and serine 8.

It belongs to the glutamate--cysteine ligase type 3 family. As to quaternary structure, heterodimer of a catalytic heavy chain and a regulatory light chain.

The catalysed reaction is L-cysteine + L-glutamate + ATP = gamma-L-glutamyl-L-cysteine + ADP + phosphate + H(+). It catalyses the reaction (2S)-2-aminobutanoate + L-glutamate + ATP = gamma-L-glutamyl-(2S)-2-aminobutanoate + ADP + phosphate + H(+). It functions in the pathway sulfur metabolism; glutathione biosynthesis; glutathione from L-cysteine and L-glutamate: step 1/2. Feedback inhibition by glutathione. Its function is as follows. Catalyzes the ATP-dependent ligation of L-glutamate and L-cysteine and participates in the first and rate-limiting step in glutathione biosynthesis. This Mus musculus (Mouse) protein is Glutamate--cysteine ligase catalytic subunit.